We begin with the raw amino-acid sequence, 479 residues long: Catalase A (479 aa).

Residue His-63 is part of the active site. Tyr-346 is a binding site for heme.

Belongs to the catalase family. Heme is required as a cofactor.

The protein localises to the peroxisome matrix. It carries out the reaction 2 H2O2 = O2 + 2 H2O. Its function is as follows. Catalyzes the degradation of hydrogen peroxide (H(2)O(2)) generated by peroxisomal oxidases to water and oxygen, thereby protecting cells from the toxic effects of hydrogen peroxide. In Botryotinia fuckeliana (Noble rot fungus), this protein is Catalase A (catA).